We begin with the raw amino-acid sequence, 507 residues long: Histidine ammonia-lyase (507 aa).

Residues 141–143 (ASG) constitute a cross-link (5-imidazolinone (Ala-Gly)). S142 bears the 2,3-didehydroalanine (Ser) mark.

This sequence belongs to the PAL/histidase family. In terms of processing, contains an active site 4-methylidene-imidazol-5-one (MIO), which is formed autocatalytically by cyclization and dehydration of residues Ala-Ser-Gly.

It is found in the cytoplasm. It catalyses the reaction L-histidine = trans-urocanate + NH4(+). It participates in amino-acid degradation; L-histidine degradation into L-glutamate; N-formimidoyl-L-glutamate from L-histidine: step 1/3. This is Histidine ammonia-lyase from Paraburkholderia phytofirmans (strain DSM 17436 / LMG 22146 / PsJN) (Burkholderia phytofirmans).